Consider the following 1481-residue polypeptide: Coiled-coil domain-containing protein 88B (1481 aa).

2 coiled-coil regions span residues 200–225 (ELVAEELEMQLRSLTGMMSRLARERD) and 258–491 (SHHL…GSQH). Disordered stretches follow at residues 430-458 (ELQRSLEPPPGSPGEASLPGAAPSLQDEV), 494-731 (LEEQ…AIPE), and 1331-1481 (PRRE…SLSQ). Serine 441 is modified (phosphoserine). Composition is skewed to polar residues over residues 542 to 557 (ASYSDITRSPKCSQAP) and 568 to 590 (QMVSQDPQTSDQALQESDPTVET). Position 649 is a phosphoserine (serine 649). Over residues 660 to 695 (TLREPLKDQKALDRELELSKQQKETGRHEQRPKGLE) the composition is skewed to basic and acidic residues. Positions 731–1308 (EEQALRDEVA…KIMDQYRVLE (578 aa)) form a coiled coil. Phosphoserine is present on residues serine 1353 and serine 1384. Residues 1371–1386 (TGSSSPAPMRRVQSSL) are compositionally biased toward polar residues. Residues 1453-1472 (LSEHEADDTREAFQEQKPEK) show a composition bias toward basic and acidic residues.

Belongs to the CCDC88 family. In terms of assembly, homodimer. Interacts with DOCK8. Interacts (via C-terminus) with intact microtubules. Interacts with dynein-dynactin motor complex. Interacts (via C-terminus) with HSPA5. In terms of tissue distribution, abundantly expressed in immune cells, including both CD4(+) and CD8(+) T-cells and in myeloid cells (at protein level). Expressed in endothelium (at protein level). Expressed specifically in spleen, bone marrow, lymph nodes and thymus. Expressed in liver and heart.

It is found in the membrane. It localises to the cytoplasm. Its subcellular location is the cytoskeleton. The protein localises to the microtubule organizing center. The protein resides in the endoplasmic reticulum. It is found in the golgi apparatus. In terms of biological role, acts as a positive regulator of T-cell maturation and inflammatory function. Required for several functions of T-cells in both the CD4(+) and the CD8(+) compartments and this includes expression of cell surface markers of activation, proliferation, and cytokine production in response to specific or non-specific stimulation and during the course of infection with the mouse malaria parasite Plasmodium berghei. Enhances NK cell cytotoxicity by positively regulating polarization of microtubule-organizing center (MTOC) to cytotoxic synapse, lytic granule transport along microtubules, and dynein-mediated clustering to MTOC. Interacts with HSPA5 and stabilizes the interaction between HSPA5 and ERN1, leading to suppression of ERN1-induced JNK activation and endoplasmic reticulum stress-induced apoptosis. The chain is Coiled-coil domain-containing protein 88B (Ccdc88b) from Mus musculus (Mouse).